The sequence spans 274 residues: Acetyl-coenzyme A carboxylase carboxyl transferase subunit alpha (274 aa).

Residues 2–250 (NKEFIKSIVV…KKELMNAMNE (249 aa)) form the CoA carboxyltransferase C-terminal domain.

Belongs to the AccA family. Acetyl-CoA carboxylase is a heterohexamer composed of biotin carboxyl carrier protein (AccB), biotin carboxylase (AccC) and two subunits each of ACCase subunit alpha (AccA) and ACCase subunit beta (AccD).

It localises to the cytoplasm. The catalysed reaction is N(6)-carboxybiotinyl-L-lysyl-[protein] + acetyl-CoA = N(6)-biotinyl-L-lysyl-[protein] + malonyl-CoA. It functions in the pathway lipid metabolism; malonyl-CoA biosynthesis; malonyl-CoA from acetyl-CoA: step 1/1. Its function is as follows. Component of the acetyl coenzyme A carboxylase (ACC) complex. First, biotin carboxylase catalyzes the carboxylation of biotin on its carrier protein (BCCP) and then the CO(2) group is transferred by the carboxyltransferase to acetyl-CoA to form malonyl-CoA. This chain is Acetyl-coenzyme A carboxylase carboxyl transferase subunit alpha, found in Clostridium botulinum (strain Eklund 17B / Type B).